The following is a 233-amino-acid chain: MADS-box protein CMB1 (233 aa).

One can recognise an MADS-box domain in the interval 3–58; sequence RGRVELKRIENKINRQVTFAKRRNGLLKKAYELSVLCDAEVALIVFSNRGKLYEFC. Residues 87 to 177 enclose the K-box domain; it reads TESSYQEYLK…KTKLEESCAS (91 aa).

The protein resides in the nucleus. This chain is MADS-box protein CMB1 (CMB1), found in Dianthus caryophyllus (Carnation).